The chain runs to 325 residues: Putative HTH-type transcriptional regulatory protein MK1005 (325 aa).

Residues 128-190 form the HTH cro/C1-type domain; it reads VDELDVSRVR…FERRVAELLE (63 aa). Residues 139–158 constitute a DNA-binding region (H-T-H motif); that stretch reads RQLRREGGRITLARAEEADV.

The protein is Putative HTH-type transcriptional regulatory protein MK1005 of Methanopyrus kandleri (strain AV19 / DSM 6324 / JCM 9639 / NBRC 100938).